The chain runs to 258 residues: UPF0246 protein YPK_3600 (258 aa).

Belongs to the UPF0246 family.

The chain is UPF0246 protein YPK_3600 from Yersinia pseudotuberculosis serotype O:3 (strain YPIII).